We begin with the raw amino-acid sequence, 215 residues long: RWD domain-containing protein C1393.09c (215 aa).

The RWD domain maps to 7 to 114; sequence EEREILESIY…SVAKEETNAI (108 aa).

It localises to the cytoplasm. The protein localises to the nucleus. The polypeptide is RWD domain-containing protein C1393.09c (Schizosaccharomyces pombe (strain 972 / ATCC 24843) (Fission yeast)).